The sequence spans 137 residues: Gonadotropin subunit beta-1 (137 aa).

Residues 1–24 form the signal peptide; the sequence is MYCTHLKTLQLVVMATLWVTPVRA. Intrachain disulfides connect Cys32/Cys78, Cys46/Cys93, Cys55/Cys108, Cys59/Cys110, and Cys113/Cys120. N-linked (GlcNAc...) asparagine glycosylation occurs at Asn36.

The protein belongs to the glycoprotein hormones subunit beta family. In terms of assembly, heterodimer of an alpha and a beta chain.

The protein resides in the secreted. Involved in gametogenesis and steroidogenesis. This Oncorhynchus masou (Cherry salmon) protein is Gonadotropin subunit beta-1 (cgba).